The primary structure comprises 252 residues: Chitooligosaccharide deacetylase (252 aa).

The Mg(2+) site is built by histidine 61 and histidine 125.

Belongs to the YdjC deacetylase family. ChbG subfamily. In terms of assembly, homodimer. Requires Mg(2+) as cofactor.

Its subcellular location is the cytoplasm. The enzyme catalyses N,N'-diacetylchitobiose + H2O = N-acetyl-beta-D-glucosaminyl-(1-&gt;4)-D-glucosamine + acetate. It carries out the reaction diacetylchitobiose-6'-phosphate + H2O = N'-monoacetylchitobiose-6'-phosphate + acetate. Its pathway is glycan degradation; chitin degradation. Its function is as follows. Involved in the degradation of chitin. ChbG is essential for growth on the acetylated chitooligosaccharides chitobiose and chitotriose but is dispensable for growth on cellobiose and chitosan dimer, the deacetylated form of chitobiose. Deacetylation of chitobiose-6-P and chitotriose-6-P is necessary for both the activation of the chb promoter by the regulatory protein ChbR and the hydrolysis of phosphorylated beta-glucosides by the phospho-beta-glucosidase ChbF. Catalyzes the removal of only one acetyl group from chitobiose-6-P to yield monoacetylchitobiose-6-P, the inducer of ChbR and the substrate of ChbF. This Escherichia fergusonii (strain ATCC 35469 / DSM 13698 / CCUG 18766 / IAM 14443 / JCM 21226 / LMG 7866 / NBRC 102419 / NCTC 12128 / CDC 0568-73) protein is Chitooligosaccharide deacetylase.